The chain runs to 170 residues: tRNA-splicing endonuclease (170 aa).

Catalysis depends on residues tyrosine 110, histidine 116, and lysine 147.

Belongs to the tRNA-intron endonuclease family. Archaeal short subfamily. In terms of assembly, homotetramer; although the tetramer contains four active sites, only two participate in the cleavage. Therefore, it should be considered as a dimer of dimers.

The enzyme catalyses pretRNA = a 3'-half-tRNA molecule with a 5'-OH end + a 5'-half-tRNA molecule with a 2',3'-cyclic phosphate end + an intron with a 2',3'-cyclic phosphate and a 5'-hydroxyl terminus.. In terms of biological role, endonuclease that removes tRNA introns. Cleaves pre-tRNA at the 5'- and 3'-splice sites to release the intron. The products are an intron and two tRNA half-molecules bearing 2',3' cyclic phosphate and 5'-OH termini. Recognizes a pseudosymmetric substrate in which 2 bulged loops of 3 bases are separated by a stem of 4 bp. In Pyrococcus furiosus (strain ATCC 43587 / DSM 3638 / JCM 8422 / Vc1), this protein is tRNA-splicing endonuclease.